We begin with the raw amino-acid sequence, 59 residues long: Large ribosomal subunit protein bL32 (59 aa).

The span at 1–22 (MAVPKKKTSNSKRDSRRAHWNR) shows a compositional bias: basic residues. The segment at 1-59 (MAVPKKKTSNSKRDSRRAHWNRKANLAAQRALSTGKSILTGRAKGFEYPTKDDDEDDDE) is disordered.

This sequence belongs to the bacterial ribosomal protein bL32 family.

This Acaryochloris marina (strain MBIC 11017) protein is Large ribosomal subunit protein bL32.